Consider the following 489-residue polypeptide: Glutamyl-tRNA(Gln) amidotransferase subunit A (489 aa).

Residues Lys78 and Ser153 each act as charge relay system in the active site. The active-site Acyl-ester intermediate is Ser177.

It belongs to the amidase family. GatA subfamily. In terms of assembly, heterotrimer of A, B and C subunits.

The enzyme catalyses L-glutamyl-tRNA(Gln) + L-glutamine + ATP + H2O = L-glutaminyl-tRNA(Gln) + L-glutamate + ADP + phosphate + H(+). Its function is as follows. Allows the formation of correctly charged Gln-tRNA(Gln) through the transamidation of misacylated Glu-tRNA(Gln) in organisms which lack glutaminyl-tRNA synthetase. The reaction takes place in the presence of glutamine and ATP through an activated gamma-phospho-Glu-tRNA(Gln). This chain is Glutamyl-tRNA(Gln) amidotransferase subunit A, found in Nitratidesulfovibrio vulgaris (strain DP4) (Desulfovibrio vulgaris).